Reading from the N-terminus, the 130-residue chain is Glycine cleavage system H protein (130 aa).

Positions 24-106 (TATVGITDFA…YGDGWMFKVK (83 aa)) constitute a Lipoyl-binding domain. Residue Lys65 is modified to N6-lipoyllysine.

It belongs to the GcvH family. The glycine cleavage system is composed of four proteins: P, T, L and H. Requires (R)-lipoate as cofactor.

In terms of biological role, the glycine cleavage system catalyzes the degradation of glycine. The H protein shuttles the methylamine group of glycine from the P protein to the T protein. This chain is Glycine cleavage system H protein, found in Marinobacter nauticus (strain ATCC 700491 / DSM 11845 / VT8) (Marinobacter aquaeolei).